Reading from the N-terminus, the 512-residue chain is ATP synthase subunit alpha (512 aa).

169–176 is an ATP binding site; sequence GDRQTGKT.

This sequence belongs to the ATPase alpha/beta chains family. As to quaternary structure, F-type ATPases have 2 components, CF(1) - the catalytic core - and CF(0) - the membrane proton channel. CF(1) has five subunits: alpha(3), beta(3), gamma(1), delta(1), epsilon(1). CF(0) has three main subunits: a(1), b(2) and c(9-12). The alpha and beta chains form an alternating ring which encloses part of the gamma chain. CF(1) is attached to CF(0) by a central stalk formed by the gamma and epsilon chains, while a peripheral stalk is formed by the delta and b chains.

It is found in the cell inner membrane. The enzyme catalyses ATP + H2O + 4 H(+)(in) = ADP + phosphate + 5 H(+)(out). Functionally, produces ATP from ADP in the presence of a proton gradient across the membrane. The alpha chain is a regulatory subunit. The sequence is that of ATP synthase subunit alpha from Dechloromonas aromatica (strain RCB).